We begin with the raw amino-acid sequence, 249 residues long: 1-(5-phosphoribosyl)-5-[(5-phosphoribosylamino)methylideneamino] imidazole-4-carboxamide isomerase (249 aa).

Aspartate 8 acts as the Proton acceptor in catalysis. The active-site Proton donor is aspartate 131.

This sequence belongs to the HisA/HisF family.

It localises to the cytoplasm. It catalyses the reaction 1-(5-phospho-beta-D-ribosyl)-5-[(5-phospho-beta-D-ribosylamino)methylideneamino]imidazole-4-carboxamide = 5-[(5-phospho-1-deoxy-D-ribulos-1-ylimino)methylamino]-1-(5-phospho-beta-D-ribosyl)imidazole-4-carboxamide. It participates in amino-acid biosynthesis; L-histidine biosynthesis; L-histidine from 5-phospho-alpha-D-ribose 1-diphosphate: step 4/9. The polypeptide is 1-(5-phosphoribosyl)-5-[(5-phosphoribosylamino)methylideneamino] imidazole-4-carboxamide isomerase (Aromatoleum aromaticum (strain DSM 19018 / LMG 30748 / EbN1) (Azoarcus sp. (strain EbN1))).